Here is a 124-residue protein sequence, read N- to C-terminus: KETAAAKFERQHMDSSTSAASSSNYCNQMMKSRNLTKDRCKPVNTFVHESLADVQAVCSQKNVACKNGQTNCYQSYSTMSITDCRETGSSKYPNCAYKTTQANKHIIVACEGNPYVPVHFDASV.

The span at 1-13 (KETAAAKFERQHM) shows a compositional bias: basic and acidic residues. A disordered region spans residues 1-22 (KETAAAKFERQHMDSSTSAASS). Lys7 and Arg10 together coordinate substrate. The active-site Proton acceptor is His12. 4 cysteine pairs are disulfide-bonded: Cys26–Cys84, Cys40–Cys95, Cys58–Cys110, and Cys65–Cys72. Asn34 carries N-linked (GlcNAc...) asparagine glycosylation. Substrate-binding positions include 41–45 (KPVNT), Lys66, and Arg85. The Proton donor role is filled by His119.

This sequence belongs to the pancreatic ribonuclease family. Monomer. Interacts with and forms tight 1:1 complexes with RNH1. Dimerization of two such complexes may occur. Interaction with RNH1 inhibits this protein. In terms of tissue distribution, pancreas.

The protein localises to the secreted. The enzyme catalyses an [RNA] containing cytidine + H2O = an [RNA]-3'-cytidine-3'-phosphate + a 5'-hydroxy-ribonucleotide-3'-[RNA].. It catalyses the reaction an [RNA] containing uridine + H2O = an [RNA]-3'-uridine-3'-phosphate + a 5'-hydroxy-ribonucleotide-3'-[RNA].. Endonuclease that catalyzes the cleavage of RNA on the 3' side of pyrimidine nucleotides. Acts on single-stranded and double-stranded RNA. The polypeptide is Ribonuclease pancreatic (RNASE1) (Bison bison (American bison)).